The following is a 620-amino-acid chain: Estrogen receptor (620 aa).

Polar residues-rich tracts occupy residues 1 to 10 (MSKRQSSVQI) and 101 to 111 (GSLQSLGSGPT). Disordered stretches follow at residues 1-55 (MSKR…RGSG) and 88-111 (YSAP…SGPT). The interval 1 to 185 (MSKRQSSVQI…GFEMAKDTRF (185 aa)) is modulating. 2 consecutive NR C4-type zinc fingers follow at residues 186 to 206 (CAVC…CEGC) and 222 to 246 (CPAT…LRKC). Residues 186–251 (CAVCSDYASG…RLRKCYEVGM (66 aa)) constitute a DNA-binding region (nuclear receptor). The segment at 252–314 (MKGGVRKDRI…GGGRLSVTSI (63 aa)) is hinge. The segment at 286 to 308 (KTVHYDGRKRSSTGGGGGGGGGR) is disordered. Residues 298–308 (TGGGGGGGGGR) are compositionally biased toward gly residues. Residues 315-551 (PPEQVLLLLQ…DLLLEMLDAH (237 aa)) form the NR LBD domain. A disordered region spans residues 558-620 (RAPQSLSQVD…RPDCTPALQD (63 aa)).

Belongs to the nuclear hormone receptor family. NR3 subfamily. Binds DNA as a homodimer. Can form a heterodimer with ER-beta. As to expression, widely expressed in brain, ovary, testis, and female liver.

It is found in the nucleus. The steroid hormones and their receptors are involved in the regulation of eukaryotic gene expression and affect cellular proliferation and differentiation in target tissues. The polypeptide is Estrogen receptor (esr1) (Oryzias latipes (Japanese rice fish)).